A 60-amino-acid polypeptide reads, in one-letter code: Small ribosomal subunit protein bS21 (60 aa).

Residues 36 to 60 (QFFETPQEKHKRKEATRRRQRSRRR) form a disordered region. Positions 44-60 (KHKRKEATRRRQRSRRR) are enriched in basic residues.

It belongs to the bacterial ribosomal protein bS21 family.

The chain is Small ribosomal subunit protein bS21 (rpsU) from Synechocystis sp. (strain ATCC 27184 / PCC 6803 / Kazusa).